The following is a 361-amino-acid chain: Phenylalanine 4-monooxygenase, chloroplastic (361 aa).

Residues 1-55 constitute a chloroplast transit peptide; it reads MLALRQGALLLSARGGQTTHDNLQLCAGPSRRPRARWISSAPRPSTLVERHIRPQ. A disordered region spans residues 47–67; that stretch reads LVERHIRPQASTASDATTSTS. Over residues 56–67 the composition is skewed to low complexity; the sequence is ASTASDATTSTS. Residues His-227, His-232, and Glu-272 each coordinate Fe cation.

Belongs to the biopterin-dependent aromatic amino acid hydroxylase family. The cofactor is Fe(2+).

It localises to the plastid. Its subcellular location is the chloroplast. The enzyme catalyses (6R)-L-erythro-5,6,7,8-tetrahydrobiopterin + L-phenylalanine + O2 = (4aS,6R)-4a-hydroxy-L-erythro-5,6,7,8-tetrahydrobiopterin + L-tyrosine. In terms of biological role, catalyzes the hydroxylation of L-phenylalanine to L-tyrosine. Can functionally complement an Escherichia coli tyrosine auxotroph. This Chlamydomonas reinhardtii (Chlamydomonas smithii) protein is Phenylalanine 4-monooxygenase, chloroplastic.